Consider the following 260-residue polypeptide: Type III pantothenate kinase (260 aa).

6-13 (DAGNTNIV) lines the ATP pocket. Substrate is bound at residue 108 to 111 (GADR). Asp110 (proton acceptor) is an active-site residue. Residue Asp130 coordinates K(+). Residue Thr133 participates in ATP binding. Thr187 is a substrate binding site.

Belongs to the type III pantothenate kinase family. In terms of assembly, homodimer. The cofactor is NH4(+). K(+) serves as cofactor.

It is found in the cytoplasm. The catalysed reaction is (R)-pantothenate + ATP = (R)-4'-phosphopantothenate + ADP + H(+). It participates in cofactor biosynthesis; coenzyme A biosynthesis; CoA from (R)-pantothenate: step 1/5. In terms of biological role, catalyzes the phosphorylation of pantothenate (Pan), the first step in CoA biosynthesis. The chain is Type III pantothenate kinase from Rhizorhabdus wittichii (strain DSM 6014 / CCUG 31198 / JCM 15750 / NBRC 105917 / EY 4224 / RW1) (Sphingomonas wittichii).